We begin with the raw amino-acid sequence, 120 residues long: Protein VraC (120 aa).

The protein is Protein VraC of Staphylococcus epidermidis (strain ATCC 35984 / DSM 28319 / BCRC 17069 / CCUG 31568 / BM 3577 / RP62A).